Here is a 348-residue protein sequence, read N- to C-terminus: MSLQDRLTELRDQGLADIKSADVLKKVNQVKVDLLGKKGPITEVLRGMRDLSPEERPKVGAYANEVRDRIQAAIDERREELEQAAVNEQLAAEKLDVTLPGREVPQGQPHVITQIITELEDLFMGMGYQIVDGDEVEEDYYNFERLNLPKDHPARDMQDTFYITKDVLLRTQTSADQPRSLENHDFSKGPLKVLSPGRVYRRDTDDATHSHQFHQIEGLVVDKHITMADLKGTLILVAKTLFGDQFDVRLRPSFFPFTEPSVEADVTCFNCNGKGCAICKQTGWIEVLGAGMVHPHVLEMSGIDPEEYGGFAFGLGPDRFAMLKYGVDDIRNFYLNDVRFLSQFYKKG.

Mg(2+) is bound at residue E259.

It belongs to the class-II aminoacyl-tRNA synthetase family. Phe-tRNA synthetase alpha subunit type 1 subfamily. Tetramer of two alpha and two beta subunits. Mg(2+) serves as cofactor.

The protein resides in the cytoplasm. The enzyme catalyses tRNA(Phe) + L-phenylalanine + ATP = L-phenylalanyl-tRNA(Phe) + AMP + diphosphate + H(+). The sequence is that of Phenylalanine--tRNA ligase alpha subunit from Lactiplantibacillus plantarum (strain ATCC BAA-793 / NCIMB 8826 / WCFS1) (Lactobacillus plantarum).